An 83-amino-acid chain; its full sequence is Cytochrome c oxidase subunit 7A2, mitochondrial (83 aa).

A mitochondrion-targeting transit peptide spans 1 to 23 (MLRNVLALRQIAQRTISTTSRRH). Over 24-48 (FENKVPEKQKLFQEDNGMPVHLKGG) the chain is Mitochondrial matrix. The residue at position 33 (lysine 33) is an N6-acetyllysine. A helical transmembrane segment spans residues 49–77 (TSDALLYRATMLLTVGGTAYAIYMLAMAA). Residues 78–83 (FPKKQN) are Mitochondrial intermembrane-facing.

This sequence belongs to the cytochrome c oxidase VIIa family. In terms of assembly, component of the cytochrome c oxidase (complex IV, CIV), a multisubunit enzyme composed of 14 subunits. The complex is composed of a catalytic core of 3 subunits MT-CO1, MT-CO2 and MT-CO3, encoded in the mitochondrial DNA, and 11 supernumerary subunits COX4I, COX5A, COX5B, COX6A, COX6B, COX6C, COX7A, COX7B, COX7C, COX8 and NDUFA4, which are encoded in the nuclear genome. The complex exists as a monomer or a dimer and forms supercomplexes (SCs) in the inner mitochondrial membrane with NADH-ubiquinone oxidoreductase (complex I, CI) and ubiquinol-cytochrome c oxidoreductase (cytochrome b-c1 complex, complex III, CIII), resulting in different assemblies (supercomplex SCI(1)III(2)IV(1) and megacomplex MCI(2)III(2)IV(2)). Interacts with PET100.

Its subcellular location is the mitochondrion inner membrane. The protein operates within energy metabolism; oxidative phosphorylation. Its function is as follows. Component of the cytochrome c oxidase, the last enzyme in the mitochondrial electron transport chain which drives oxidative phosphorylation. The respiratory chain contains 3 multisubunit complexes succinate dehydrogenase (complex II, CII), ubiquinol-cytochrome c oxidoreductase (cytochrome b-c1 complex, complex III, CIII) and cytochrome c oxidase (complex IV, CIV), that cooperate to transfer electrons derived from NADH and succinate to molecular oxygen, creating an electrochemical gradient over the inner membrane that drives transmembrane transport and the ATP synthase. Cytochrome c oxidase is the component of the respiratory chain that catalyzes the reduction of oxygen to water. Electrons originating from reduced cytochrome c in the intermembrane space (IMS) are transferred via the dinuclear copper A center (CU(A)) of subunit 2 and heme A of subunit 1 to the active site in subunit 1, a binuclear center (BNC) formed by heme A3 and copper B (CU(B)). The BNC reduces molecular oxygen to 2 water molecules using 4 electrons from cytochrome c in the IMS and 4 protons from the mitochondrial matrix. In Rattus norvegicus (Rat), this protein is Cytochrome c oxidase subunit 7A2, mitochondrial (Cox7a2).